The sequence spans 143 residues: Large ribosomal subunit protein uL16 (143 aa).

Over residues 1-17 (MLQPKRTKFRKAHKGRI) the composition is skewed to basic residues. The disordered stretch occupies residues 1 to 20 (MLQPKRTKFRKAHKGRIHGN).

Belongs to the universal ribosomal protein uL16 family. In terms of assembly, part of the 50S ribosomal subunit.

Binds 23S rRNA and is also seen to make contacts with the A and possibly P site tRNAs. The chain is Large ribosomal subunit protein uL16 from Zymomonas mobilis subsp. mobilis (strain ATCC 31821 / ZM4 / CP4).